Consider the following 304-residue polypeptide: E3 ubiquitin-protein ligase CHIP (304 aa).

A compositionally biased stretch (basic and acidic residues) spans methionine 1 to glycine 10. The tract at residues methionine 1 to leucine 30 is disordered. A Glycyl lysine isopeptide (Lys-Gly) (interchain with G-Cter in ubiquitin) cross-link involves residue lysine 2. Positions alanine 11 to serine 20 are enriched in gly residues. A Phosphoserine modification is found at serine 20. Lysine 23 participates in a covalent cross-link: Glycyl lysine isopeptide (Lys-Gly) (interchain with G-Cter in ubiquitin). Residues serine 24 and serine 26 each carry the phosphoserine modification. 3 TPR repeats span residues alanine 27–valine 60, alanine 61–serine 94, and lysine 96–glutamine 128. The tract at residues glycine 102–isoleucine 201 is required for interaction with MAPK7. The interval alanine 143 to glutamine 197 is required for interaction with and ubiquitination of MYOCD. Positions lysine 144–glutamine 198 are required for interaction with FOXO1. Residues lysine 144–tyrosine 304 form a required for ubiquitination of FOXO1 region. Serine 150 is modified (phosphoserine). Glycyl lysine isopeptide (Lys-Gly) (interchain with G-Cter in ubiquitin) cross-links involve residues lysine 222 and lysine 256. The 75-residue stretch at aspartate 227–valine 301 folds into the U-box domain. A Phosphoserine modification is found at serine 274.

In terms of assembly, homodimer. Interacts with BAG2, and with the E2 ubiquitin conjugating enzymes UBE2D1, UBE2D2 and UBE2D3. Detected in a ternary complex containing STUB1, HSPA1A and HSPBP1. Part of a complex composed of STUB1/CHIP, VCP/p97, CHRNA3, and UBXN2A that modulates the ubiquitination and endoplasmic reticulum-associated degradation (ERAD) of CHRNA3. Within the complex UBXN2A acts as a scaffold protein required for the interaction of CHRNA3 with VCP/p97, this interaction also inhibits CHRNA3 ubiquitination by STUB1/CHIP and subsequently ERAD. Interacts with MKKS. Interacts with DNAAF4. Interacts (via the U-box domain) with the UBE2V2-UBE2N heterodimer; the complex has a specific 'Lys-63'-linked polyubiquitination activity. Interacts (when monoubiquitinated) with ATXN3. Interacts with UBE2W. Interacts with DNAJB6. Interacts with FLCN and HSP90AA1. Interacts with HSP90. Interacts with UBE2N and UBE2V1. Interacts (via TPR repeats) with HSPA8 (via C-terminus). Interacts (via TPR repeats) with HSPA1A (via C-terminus). Interacts with the non-acetylated form of HSPA1A and HSPA1B. Interacts with SMAD3 and HSP90AB1. Interacts with UBE4B. Interacts with PRMT5. Interacts with MYOCD (via C-terminus). Interacts with FOXO1 (when phosphorylated on 'Ser-250'). Interacts with MAPK7/ERK5; the interaction is enhanced in the presence of IGF1 or MAP2K5 and promotes STUB1/CHIP E3 ligase activity. Interacts with and ubiquitinates ESR1; the interaction is promoted in the absence of estradiol (17-beta-estradiol/E2). Interacts with ESR2. Interacts with and ubiquitinates NFATC3; HSPA1A/HSP70 is required as a co-chaperone. In macrophages, interacts with PAQR3; the interaction promotes PPARG poylubiquitination and STUB1-mediated degradation. Component of the chaperone-assisted selective autophagy (CASA) complex consisting of BAG3, HSPA8/HSC70, HSPB8 and STUB1/CHIP. Post-translationally, auto-ubiquitinated; mediated by UBE2D1 and UBE2D2 and enhanced in the presence of MAP2K5. Monoubiquitinated at Lys-2 following cell stress by UBE2W, promoting the interaction with ATXN3. In terms of tissue distribution, expressed in the adventitia layer of the carotid artery (at protein level). Expressed in the CA1 region of the hippocampus (at protein level). Expressed in the uterus (at protein level).

The protein resides in the cytoplasm. It is found in the nucleus. The protein localises to the mitochondrion. The enzyme catalyses S-ubiquitinyl-[E2 ubiquitin-conjugating enzyme]-L-cysteine + [acceptor protein]-L-lysine = [E2 ubiquitin-conjugating enzyme]-L-cysteine + N(6)-ubiquitinyl-[acceptor protein]-L-lysine.. The protein operates within protein modification; protein ubiquitination. E3 ubiquitin-protein ligase which targets misfolded chaperone substrates towards proteasomal degradation. Plays a role in the maintenance of mitochondrial morphology and promotes mitophagic removal of dysfunctional mitochondria; thereby acts as a protector against apoptosis in response to cellular stress. Negatively regulates vascular smooth muscle contraction, via degradation of the transcriptional activator MYOCD and subsequent loss of transcription of genes involved in vascular smooth muscle contraction. Promotes survival and proliferation of cardiac smooth muscle cells via ubiquitination and degradation of FOXO1, resulting in subsequent repression of FOXO1-mediated transcription of pro-apoptotic genes. Ubiquitinates ICER-type isoforms of CREM and targets them for proteasomal degradation, thereby acts as a positive effector of MAPK/ERK-mediated inhibition of apoptosis in cardiomyocytes. Inhibits lipopolysaccharide-induced apoptosis and hypertrophy in cardiomyocytes, via ubiquitination and subsequent proteasomal degradation of NFATC3. Collaborates with ATXN3 in the degradation of misfolded chaperone substrates: ATXN3 restricting the length of ubiquitin chain attached to STUB1/CHIP substrates and preventing further chain extension. Ubiquitinates NOS1 in concert with Hsp70 and Hsp40. Modulates the activity of several chaperone complexes, including Hsp70, Hsc70 and Hsp90. Ubiquitinates CHRNA3 targeting it for endoplasmic reticulum-associated degradation in cortical neurons, as part of the STUB1-VCP-UBXN2A complex. Ubiquitinates and promotes ESR1 proteasomal degradation in response to age-related circulating estradiol (17-beta-estradiol/E2) decline, thereby promotes neuronal apoptosis in response to ischemic reperfusion injury. Mediates transfer of non-canonical short ubiquitin chains to HSPA8 that have no effect on HSPA8 degradation. Mediates polyubiquitination of DNA polymerase beta (POLB) at 'Lys-41', 'Lys-61' and 'Lys-81', thereby playing a role in base-excision repair: catalyzes polyubiquitination by amplifying the HUWE1/ARF-BP1-dependent monoubiquitination and leading to POLB-degradation by the proteasome. Mediates polyubiquitination of CYP3A4. Ubiquitinates EPHA2 and may regulate the receptor stability and activity through proteasomal degradation. Acts as a co-chaperone for HSPA1A and HSPA1B chaperone proteins and promotes ubiquitin-mediated protein degradation. Negatively regulates the suppressive function of regulatory T-cells (Treg) during inflammation by mediating the ubiquitination and degradation of FOXP3 in a HSPA1A/B-dependent manner. Catalyzes monoubiquitination of SIRT6, preventing its degradation by the proteasome. Likely mediates polyubiquitination and down-regulates plasma membrane expression of PD-L1/CD274, an immune inhibitory ligand critical for immune tolerance to self and antitumor immunity. Negatively regulates TGF-beta signaling by modulating the basal level of SMAD3 via ubiquitin-mediated degradation. Plays a role in the degradation of TP53. Mediates ubiquitination of RIPK3 leading to its subsequent proteasome-dependent degradation. May regulate myosin assembly in striated muscles together with UBE4B and VCP/p97 by targeting myosin chaperone UNC45B for proteasomal degradation. Ubiquitinates PPARG in macrophages playing a role in M2 macrophages polarization and angiogenesis. The sequence is that of E3 ubiquitin-protein ligase CHIP from Rattus norvegicus (Rat).